Consider the following 192-residue polypeptide: dTTP/UTP pyrophosphatase (192 aa).

D70 serves as the catalytic Proton acceptor.

It belongs to the Maf family. YhdE subfamily. Requires a divalent metal cation as cofactor.

Its subcellular location is the cytoplasm. It carries out the reaction dTTP + H2O = dTMP + diphosphate + H(+). The catalysed reaction is UTP + H2O = UMP + diphosphate + H(+). Its function is as follows. Nucleoside triphosphate pyrophosphatase that hydrolyzes dTTP and UTP. May have a dual role in cell division arrest and in preventing the incorporation of modified nucleotides into cellular nucleic acids. The chain is dTTP/UTP pyrophosphatase from Alkaliphilus metalliredigens (strain QYMF).